The chain runs to 313 residues: Ribosomal RNA small subunit methyltransferase H (313 aa).

S-adenosyl-L-methionine is bound by residues 31–33, D51, F77, D95, and Q102; that span reads GGH.

This sequence belongs to the methyltransferase superfamily. RsmH family.

It localises to the cytoplasm. It catalyses the reaction cytidine(1402) in 16S rRNA + S-adenosyl-L-methionine = N(4)-methylcytidine(1402) in 16S rRNA + S-adenosyl-L-homocysteine + H(+). Functionally, specifically methylates the N4 position of cytidine in position 1402 (C1402) of 16S rRNA. This is Ribosomal RNA small subunit methyltransferase H from Xylella fastidiosa (strain M23).